Here is a 96-residue protein sequence, read N- to C-terminus: Co-chaperonin GroES (96 aa).

The protein belongs to the GroES chaperonin family. As to quaternary structure, heptamer of 7 subunits arranged in a ring. Interacts with the chaperonin GroEL.

It localises to the cytoplasm. Together with the chaperonin GroEL, plays an essential role in assisting protein folding. The GroEL-GroES system forms a nano-cage that allows encapsulation of the non-native substrate proteins and provides a physical environment optimized to promote and accelerate protein folding. GroES binds to the apical surface of the GroEL ring, thereby capping the opening of the GroEL channel. This is Co-chaperonin GroES from Solidesulfovibrio magneticus (strain ATCC 700980 / DSM 13731 / RS-1) (Desulfovibrio magneticus).